We begin with the raw amino-acid sequence, 148 residues long: Putative pre-16S rRNA nuclease (148 aa).

The protein belongs to the YqgF nuclease family.

The protein resides in the cytoplasm. In terms of biological role, could be a nuclease involved in processing of the 5'-end of pre-16S rRNA. The sequence is that of Putative pre-16S rRNA nuclease from Chlamydia muridarum (strain MoPn / Nigg).